The sequence spans 354 residues: Homeobox protein Nkx-2.4 (354 aa).

Positions 188 to 247 (RRKRRVLFSQAQVYELERRFKQQKYLSAPEREHLASMIHLTPTQVKIWFQNHRYKMKRQA) form a DNA-binding region, homeobox. The segment at 245–329 (RQAKDKAAQQ…PALHGPGGGL (85 aa)) is disordered. Positions 262-272 (GPPPPPPPPSP) are enriched in pro residues. The span at 290-304 (GAGTPTPGQGGQQPQ) shows a compositional bias: low complexity.

The protein belongs to the NK-2 homeobox family. As to expression, in the embryo it is detected in the posterior hypothalamus and later in the head. In the adult it is detected only in testis.

The protein localises to the nucleus. In terms of biological role, probable transcription factor. The sequence is that of Homeobox protein Nkx-2.4 (Nkx2-4) from Mus musculus (Mouse).